Consider the following 196-residue polypeptide: UPF0215 protein MM_1007 (196 aa).

Belongs to the UPF0215 family.

The chain is UPF0215 protein MM_1007 from Methanosarcina mazei (strain ATCC BAA-159 / DSM 3647 / Goe1 / Go1 / JCM 11833 / OCM 88) (Methanosarcina frisia).